A 394-amino-acid chain; its full sequence is Elongation factor Tu (394 aa).

One can recognise a tr-type G domain in the interval 10 to 204 (KPHINVGTIG…ALDNYIPEPK (195 aa)). The tract at residues 19–26 (GHVDHGKT) is G1. Position 19–26 (19–26 (GHVDHGKT)) interacts with GTP. Threonine 26 contributes to the Mg(2+) binding site. Positions 60–64 (GITIN) are G2. The interval 81 to 84 (DCPG) is G3. GTP-binding positions include 81–85 (DCPGH) and 136–139 (NKCD). A G4 region spans residues 136-139 (NKCD). Residues 174–176 (SAL) form a G5 region.

This sequence belongs to the TRAFAC class translation factor GTPase superfamily. Classic translation factor GTPase family. EF-Tu/EF-1A subfamily. As to quaternary structure, monomer.

The protein localises to the cytoplasm. It carries out the reaction GTP + H2O = GDP + phosphate + H(+). Its function is as follows. GTP hydrolase that promotes the GTP-dependent binding of aminoacyl-tRNA to the A-site of ribosomes during protein biosynthesis. The sequence is that of Elongation factor Tu from Blochmanniella pennsylvanica (strain BPEN).